We begin with the raw amino-acid sequence, 299 residues long: Probable endonuclease 4 (299 aa).

Positions 69, 110, 145, 179, 182, 214, 227, 229, and 259 each coordinate Zn(2+).

Belongs to the AP endonuclease 2 family. Requires Zn(2+) as cofactor.

The enzyme catalyses Endonucleolytic cleavage to 5'-phosphooligonucleotide end-products.. In terms of biological role, endonuclease IV plays a role in DNA repair. It cleaves phosphodiester bonds at apurinic or apyrimidinic (AP) sites, generating a 3'-hydroxyl group and a 5'-terminal sugar phosphate. The sequence is that of Probable endonuclease 4 from Geobacillus kaustophilus (strain HTA426).